Consider the following 259-residue polypeptide: MPRLHDHVWSYPSAGAARPYSLPRGMIAAALCPQGPGAPEPEPAPRGQREGTAGFSARPGSWHHDLVQRSLVLFSFGVVLALVLNLLQIQRNVTLFPDEVIATIFSSAWWVPPCCGTAAAVVGLLYPCIDSHLGEPHKFKREWASVMRCIAVFVGINHASAKLDFANNVQLSLTLAALSLGLWWTFDRSRSGLGLGITIAFLATLITQFLVYNGVYQYTSPDFLYIRSWLPCIFFSGGVTVGNIGRQLAMGVPEKPHSD.

At 1–66 the chain is on the cytoplasmic side; the sequence is MPRLHDHVWS…ARPGSWHHDL (66 aa). The disordered stretch occupies residues 33–57; that stretch reads PQGPGAPEPEPAPRGQREGTAGFSA. A helical membrane pass occupies residues 67–89; that stretch reads VQRSLVLFSFGVVLALVLNLLQI. The Extracellular portion of the chain corresponds to 90-108; it reads QRNVTLFPDEVIATIFSSA. Residues 109-126 traverse the membrane as a helical segment; the sequence is WWVPPCCGTAAAVVGLLY. Residues 127-141 lie on the Cytoplasmic side of the membrane; the sequence is PCIDSHLGEPHKFKR. Residues Lys-138 and Lys-140 each participate in a glycyl lysine isopeptide (Lys-Gly) (interchain with G-Cter in ubiquitin) cross-link. A helical membrane pass occupies residues 142–164; sequence EWASVMRCIAVFVGINHASAKLD. At 165-167 the chain is on the extracellular side; it reads FAN. The helical transmembrane segment at 168-186 threads the bilayer; that stretch reads NVQLSLTLAALSLGLWWTF. The Cytoplasmic segment spans residues 187-191; that stretch reads DRSRS. Ser-189 carries the phosphoserine modification. Residues 192-213 traverse the membrane as a helical segment; it reads GLGLGITIAFLATLITQFLVYN. The Extracellular segment spans residues 214–227; it reads GVYQYTSPDFLYIR. The helical transmembrane segment at 228–245 threads the bilayer; that stretch reads SWLPCIFFSGGVTVGNIG. At 246 to 259 the chain is on the cytoplasmic side; the sequence is RQLAMGVPEKPHSD. Residues 253–259 carry the KxHxx motif; that stretch reads PEKPHSD.

It belongs to the INSIG family. Interacts with SCAP; interaction is direct and only takes place in the presence of sterols; it prevents interaction between SCAP and the coat protein complex II (COPII). Associates with the SCAP-SREBP complex (composed of SCAP and SREBF1/SREBP1 or SREBF2/SREBP2); association is mediated via its interaction with SCAP and only takes place in the presence of sterols. Interaction with SCAP is mutually exclusive with PAQR3. Interacts with HMGCR (via its SSD); the interaction, accelerated by sterols, leads to the recruitment of HMGCR to AMFR/gp78 for its ubiquitination by the sterol-mediated ERAD pathway. Interacts with AMFR/gp78 (via its membrane domain); the interaction recruits HMCR at the ER membrane for its ubiquitination and degradation by the sterol-mediated ERAD pathway. Interacts with SOAT2/ACAT2; leading to promote recruitment of AMFR/gp78 and subsequent ubiquitination of SOAT2/ACAT2. Interacts with RNF139. Interacts with RNF145. Post-translationally, phosphorylation at Ser-189 by PCK1 reduces binding to oxysterol, disrupting the interaction between INSIG1 and SCAP, thereby promoting nuclear translocation of SREBP proteins (SREBF1/SREBP1 or SREBF2/SREBP2) and subsequent transcription of downstream lipogenesis-related genes. In terms of processing, ubiquitinated by AMFR/gp78 in response to sterol deprivation, leading to its degradation: when the SCAP-SREBP complex becomes dissociated from INSIG1, INSIG1 is then ubiquitinated and degraded in proteasomes. Although ubiquitination is required for rapid INSIG1 degradation, it is not required for release of the SCAP-SREBP complex. Ubiquitinated by RNF139. In terms of tissue distribution, highly expressed in liver and kidney.

The protein resides in the endoplasmic reticulum membrane. Functionally, oxysterol-binding protein that mediates feedback control of cholesterol synthesis by controlling both endoplasmic reticulum to Golgi transport of SCAP and degradation of HMGCR. Acts as a negative regulator of cholesterol biosynthesis by mediating the retention of the SCAP-SREBP complex in the endoplasmic reticulum, thereby blocking the processing of sterol regulatory element-binding proteins (SREBPs) SREBF1/SREBP1 and SREBF2/SREBP2. Binds oxysterol, including 25-hydroxycholesterol, regulating interaction with SCAP and retention of the SCAP-SREBP complex in the endoplasmic reticulum. In presence of oxysterol, interacts with SCAP, retaining the SCAP-SREBP complex in the endoplasmic reticulum, thereby preventing SCAP from escorting SREBF1/SREBP1 and SREBF2/SREBP2 to the Golgi. Sterol deprivation or phosphorylation by PCK1 reduce oxysterol-binding, disrupting the interaction between INSIG1 and SCAP, thereby promoting Golgi transport of the SCAP-SREBP complex, followed by processing and nuclear translocation of SREBF1/SREBP1 and SREBF2/SREBP2. Also regulates cholesterol synthesis by regulating degradation of HMGCR: initiates the sterol-mediated ubiquitin-mediated endoplasmic reticulum-associated degradation (ERAD) of HMGCR via recruitment of the reductase to the ubiquitin ligases AMFR/gp78 and/or RNF139. Also regulates degradation of SOAT2/ACAT2 when the lipid levels are low: initiates the ubiquitin-mediated degradation of SOAT2/ACAT2 via recruitment of the ubiquitin ligases AMFR/gp78. The chain is Insulin-induced gene 1 protein from Rattus norvegicus (Rat).